A 198-amino-acid polypeptide reads, in one-letter code: Glycerol-3-phosphate acyltransferase (198 aa).

6 consecutive transmembrane segments (helical) span residues 1 to 21 (MNLL…GYLA), 55 to 75 (VFLL…YLLL), 79 to 99 (WQVA…WLNW), 111 to 131 (IFLG…IIMI), 136 to 156 (IVSL…FLSF), and 158 to 178 (GSNL…LVIW).

The protein belongs to the PlsY family. Probably interacts with PlsX.

It is found in the cell inner membrane. The enzyme catalyses an acyl phosphate + sn-glycerol 3-phosphate = a 1-acyl-sn-glycero-3-phosphate + phosphate. It functions in the pathway lipid metabolism; phospholipid metabolism. In terms of biological role, catalyzes the transfer of an acyl group from acyl-phosphate (acyl-PO(4)) to glycerol-3-phosphate (G3P) to form lysophosphatidic acid (LPA). This enzyme utilizes acyl-phosphate as fatty acyl donor, but not acyl-CoA or acyl-ACP. This is Glycerol-3-phosphate acyltransferase from Prochlorococcus marinus (strain NATL2A).